The sequence spans 390 residues: Dynein regulatory complex subunit 5 (390 aa).

3 LRR repeats span residues 182 to 205 (TETL…MLAS), 210 to 233 (NLSI…ALAK), and 238 to 261 (HSVI…SLAR).

Belongs to the DRC5 family. Component of the nexin-dynein regulatory complex (N-DRC). Interacts with DRC1, DRC2, DRC3, DRC4, DRC7 and DRC11.

The protein localises to the cell projection. Its subcellular location is the cilium. The protein resides in the flagellum. It localises to the cytoplasm. It is found in the cytoskeleton. The protein localises to the flagellum axoneme. Functionally, component of the nexin-dynein regulatory complex (N-DRC) a key regulator of ciliary/flagellar motility which maintains the alignment and integrity of the distal axoneme and regulates microtubule sliding in motile axonemes. May play a role in the assembly of N-DRC. The sequence is that of Dynein regulatory complex subunit 5 from Chlamydomonas reinhardtii (Chlamydomonas smithii).